A 272-amino-acid chain; its full sequence is NH(3)-dependent NAD(+) synthetase (272 aa).

45-52 is an ATP binding site; that stretch reads GISGGQDS. Asp-51 contacts Mg(2+). Position 138 (Arg-138) interacts with deamido-NAD(+). Thr-158 contributes to the ATP binding site. Glu-163 serves as a coordination point for Mg(2+). 2 residues coordinate deamido-NAD(+): Lys-171 and Asp-178. Residues Lys-187 and Thr-209 each coordinate ATP. Residue 258-259 participates in deamido-NAD(+) binding; it reads HK.

The protein belongs to the NAD synthetase family. In terms of assembly, homodimer.

The enzyme catalyses deamido-NAD(+) + NH4(+) + ATP = AMP + diphosphate + NAD(+) + H(+). The protein operates within cofactor biosynthesis; NAD(+) biosynthesis; NAD(+) from deamido-NAD(+) (ammonia route): step 1/1. Its function is as follows. Catalyzes the ATP-dependent amidation of deamido-NAD to form NAD. Uses ammonia as a nitrogen source. This Bacillus cereus (strain 03BB102) protein is NH(3)-dependent NAD(+) synthetase.